The chain runs to 1016 residues: UvrABC system protein A (1016 aa).

Gly32–Ser39 contributes to the ATP binding site. The C4-type zinc finger occupies Cys259–Cys286. ABC transporter domains follow at residues Trp315–Leu627 and Gly647–Arg975. Gly679–Ser686 contributes to the ATP binding site. A C4-type zinc finger spans residues Cys778–Cys804. Residues Glu984 to Asp1016 form a disordered region. Basic and acidic residues predominate over residues Pro985–Ala996.

It belongs to the ABC transporter superfamily. UvrA family. As to quaternary structure, forms a heterotetramer with UvrB during the search for lesions.

The protein localises to the cytoplasm. In terms of biological role, the UvrABC repair system catalyzes the recognition and processing of DNA lesions. UvrA is an ATPase and a DNA-binding protein. A damage recognition complex composed of 2 UvrA and 2 UvrB subunits scans DNA for abnormalities. When the presence of a lesion has been verified by UvrB, the UvrA molecules dissociate. The chain is UvrABC system protein A from Deinococcus radiodurans (strain ATCC 13939 / DSM 20539 / JCM 16871 / CCUG 27074 / LMG 4051 / NBRC 15346 / NCIMB 9279 / VKM B-1422 / R1).